Reading from the N-terminus, the 116-residue chain is Nucleoid-associated protein P9301_00191 (116 aa).

Belongs to the YbaB/EbfC family. As to quaternary structure, homodimer.

It localises to the cytoplasm. The protein localises to the nucleoid. Its function is as follows. Binds to DNA and alters its conformation. May be involved in regulation of gene expression, nucleoid organization and DNA protection. In Prochlorococcus marinus (strain MIT 9301), this protein is Nucleoid-associated protein P9301_00191.